Consider the following 182-residue polypeptide: MAKIGLFFGSDTGTTRKIAKQIKDMFDDEVMAKPLNVNRADVADFMAYDFLILGTPTLGDGQLPGLSANAASESWEEFLPRIADQDFSGKTIALFGLGDQVTYPLEFVNALFFLHEFFSDRGAKLVGRWPAKGYGFEDSLAVVEGEFLGLALDQDNQAALTPERLKGWLSLIAADFGLVLPA.

The 170-residue stretch at 4–173 folds into the Flavodoxin-like domain; sequence IGLFFGSDTG…RLKGWLSLIA (170 aa).

It belongs to the flavodoxin family. FMN serves as cofactor.

Functionally, low-potential electron donor to a number of redox enzymes. NifF is the electron donor to nitrogenase. The sequence is that of Flavodoxin (nifF) from Rhodobacter capsulatus (strain ATCC BAA-309 / NBRC 16581 / SB1003).